Reading from the N-terminus, the 202-residue chain is Outer-membrane lipoprotein carrier protein (202 aa).

The first 20 residues, Met1–Ala20, serve as a signal peptide directing secretion.

It belongs to the LolA family. In terms of assembly, monomer.

The protein resides in the periplasm. In terms of biological role, participates in the translocation of lipoproteins from the inner membrane to the outer membrane. Only forms a complex with a lipoprotein if the residue after the N-terminal Cys is not an aspartate (The Asp acts as a targeting signal to indicate that the lipoprotein should stay in the inner membrane). In Aeromonas salmonicida (strain A449), this protein is Outer-membrane lipoprotein carrier protein.